An 834-amino-acid chain; its full sequence is Pentatricopeptide repeat-containing protein At4g39530 (834 aa).

PPR repeat units lie at residues 78–112 (DTYL…NLVS), 113–144 (WSTM…KDSP), 145–181 (NEYI…GFDR), 182–212 (DVYV…LPEK), 213–247 (STVT…NVVP), 248–282 (DGYI…GLEM), 283–313 (DASL…MPNK), 314–348 (NIIS…GLKP), 349–383 (DMYA…NLGN), 384–414 (DSYV…FAAA), 415–452 (DVVL…LIRP), 453–487 (SLLT…GLNL), 488–518 (DIFA…MKVK), 519–553 (DLVI…RERP), 554–588 (DEFT…GLEC), 589–619 (NPYI…AASR), 620–654 (DVVC…GIEP), 655–689 (NYIT…GIEP), and 690–720 (ETEH…MPTK). The segment at 725–800 (VWRSLLSGCA…EPGRSWIGIN (76 aa)) is type E motif. Residues 801 to 831 (KEVHIFLSKDKSHCKANQIYEVLDDLLVQIR) form a type E(+) motif region.

Belongs to the PPR family. PCMP-E subfamily.

This is Pentatricopeptide repeat-containing protein At4g39530 (PCMP-E52) from Arabidopsis thaliana (Mouse-ear cress).